The chain runs to 514 residues: FAD-dependent monooxygenase AacuC (514 aa).

The disordered stretch occupies residues Met-1–Pro-29. Residues Thr-8 to Pro-17 are compositionally biased toward basic and acidic residues. FAD is bound by residues Val-79 and Arg-146. Arg-227 is an active-site residue. FAD is bound by residues Asp-358 and Gly-371.

The protein belongs to the paxM FAD-dependent monooxygenase family. FAD serves as cofactor.

It functions in the pathway secondary metabolite biosynthesis. FAD-dependent monooxygenase; part of the gene cluster that mediates the biosynthesis of the tetrahydroxanthone dimer secalonic acid D. The pathway begins with the synthesis of atrochrysone thioester by the polyketide synthase AacuL. The atrochrysone carboxyl ACP thioesterase AacuM then breaks the thioester bond and releases the atrochrysone carboxylic acid from AacuL. Atrochrysone carboxylic acid is decarboxylated by the decarboxylase AacuI, and oxidized by the anthrone oxygenase AacuG to yield emodin. Emodin is then reduced to emodin hydroquinone by a yet unidentified oxidoreductase. A-ring reduction by the short chain dehydrogenase AacuN, dehydration by the scytalone dehydratase-like protein AacuK and probable spontaneous re-oxidation, results in overall deoxygenation to chrysophanol. Baeyer-Villiger oxidation by the Baeyer-Villiger monooxygenase (BVMO) AacuH then yields monodictyphenone. Monodictyphenone is transformed into compounds with the tetrahydroxanthone skeleton via methylesterification by the methyltransferase AacuQ, followed by the action of the flavin-dependent monooxygenase AacuC, the isomerase AacuP, and the short chain dehydrogenase/reductase AacuF or AacuD. AacuF and AacuD should accept the same compound as a substrate but perform the ketoreduction with a different stereoselectivity, thus yielding blennolides B and A, respectively. In the final step of the biosynthesis, the cytochrome P450 monooxygenase AacuE accepts blennolide B and/or blennolide A to conduct the dimerization reaction to furnish the tetrahydroxanthone dimers, secalonic acids D, B, and F. In Aspergillus aculeatus (strain ATCC 16872 / CBS 172.66 / WB 5094), this protein is FAD-dependent monooxygenase AacuC.